Reading from the N-terminus, the 112-residue chain is Nucleoid-associated protein FTH_1374 (112 aa).

Residues 1–27 (MNFDMSKLMQQAQKMQEQMKKAQQERE) are disordered. Positions 17 to 27 (EQMKKAQQERE) are enriched in basic and acidic residues.

It belongs to the YbaB/EbfC family. In terms of assembly, homodimer.

The protein localises to the cytoplasm. Its subcellular location is the nucleoid. Its function is as follows. Binds to DNA and alters its conformation. May be involved in regulation of gene expression, nucleoid organization and DNA protection. The polypeptide is Nucleoid-associated protein FTH_1374 (Francisella tularensis subsp. holarctica (strain OSU18)).